The primary structure comprises 430 residues: Phosphoserine aminotransferase 1, chloroplastic (430 aa).

The N-terminal 51 residues, 1–51 (MAATTNSFLVGSNNTQIPALKPKSSSQSFLHLSKPNTVNFVSKTKPVAVRC), are a transit peptide targeting the chloroplast. An N-acetylvaline modification is found at V52. Residue R111 coordinates L-glutamate. Residues 145 to 146 (AT), W171, T221, D241, and Q264 each bind pyridoxal 5'-phosphate. K265 is modified (N6-(pyridoxal phosphate)lysine). 306–307 (NT) lines the pyridoxal 5'-phosphate pocket.

This sequence belongs to the class-V pyridoxal-phosphate-dependent aminotransferase family. SerC subfamily. As to quaternary structure, homodimer. Pyridoxal 5'-phosphate serves as cofactor. Ubiquitous, but expressed preferentially in light-grown roots and shoots. Detected in root meristems and in root tissues surrounding the vascular bundle.

The protein localises to the plastid. It localises to the chloroplast. It carries out the reaction O-phospho-L-serine + 2-oxoglutarate = 3-phosphooxypyruvate + L-glutamate. The enzyme catalyses 4-(phosphooxy)-L-threonine + 2-oxoglutarate = (R)-3-hydroxy-2-oxo-4-phosphooxybutanoate + L-glutamate. It functions in the pathway amino-acid biosynthesis; L-serine biosynthesis; L-serine from 3-phospho-D-glycerate: step 2/3. The protein operates within cofactor biosynthesis; pyridoxine 5'-phosphate biosynthesis; pyridoxine 5'-phosphate from D-erythrose 4-phosphate: step 3/5. Its activity is regulated as follows. Inhibited by high concentration of cysteine and by 3-phosphonooxypyruvate. Not inhibited by serine, threonine, valine, glycine, tryptophan and O-acetyl-L-serine. In terms of biological role, involved in the plastidial phosphorylated pathway of serine biosynthesis (PPSB). Catalyzes the reversible conversion of 3-phosphohydroxypyruvate to phosphoserine. This chain is Phosphoserine aminotransferase 1, chloroplastic, found in Arabidopsis thaliana (Mouse-ear cress).